Here is a 233-residue protein sequence, read N- to C-terminus: Sugar fermentation stimulation protein homolog (233 aa).

This sequence belongs to the SfsA family.

This chain is Sugar fermentation stimulation protein homolog, found in Rhodospirillum centenum (strain ATCC 51521 / SW).